The following is a 78-amino-acid chain: Large ribosomal subunit protein bL28 (78 aa).

This sequence belongs to the bacterial ribosomal protein bL28 family.

In Synechococcus sp. (strain CC9311), this protein is Large ribosomal subunit protein bL28.